Reading from the N-terminus, the 431-residue chain is tRNA(Ile)-lysidine synthase (431 aa).

19–24 provides a ligand contact to ATP; that stretch reads STGIDS.

It belongs to the tRNA(Ile)-lysidine synthase family.

It localises to the cytoplasm. It catalyses the reaction cytidine(34) in tRNA(Ile2) + L-lysine + ATP = lysidine(34) in tRNA(Ile2) + AMP + diphosphate + H(+). Functionally, ligates lysine onto the cytidine present at position 34 of the AUA codon-specific tRNA(Ile) that contains the anticodon CAU, in an ATP-dependent manner. Cytidine is converted to lysidine, thus changing the amino acid specificity of the tRNA from methionine to isoleucine. This Staphylococcus aureus (strain COL) protein is tRNA(Ile)-lysidine synthase.